The sequence spans 376 residues: Drebrin-like protein B (376 aa).

The 132-residue stretch at 2–133 (SVNLSKNGAA…EPESIMEKVA (132 aa)) folds into the ADF-H domain. The stretch at 175 to 231 (KENFWAKAEKDEEERRIEEHRRANVEKDRLERERKEREQREAEERERRFRERSKEID) forms a coiled coil. A compositionally biased stretch (basic and acidic residues) spans 202–242 (DRLERERKEREQREAEERERRFRERSKEIDGHRKQQEEVEK). The tract at residues 202 to 288 (DRLERERKER…FTASQQEEEN (87 aa)) is disordered. The segment covering 268-283 (ESGSVSAQPEQFTASQ) has biased composition (polar residues). One can recognise an SH3 domain in the interval 317–376 (DSGMCARALYDYQAADDTEISFDPDDVIIQIEMIDDGWWRGVAPSGHFGMFPANYVELLE).

The protein belongs to the ABP1 family.

It is found in the cytoplasm. It localises to the cytoskeleton. The protein resides in the cell projection. The protein localises to the lamellipodium. Its subcellular location is the ruffle. It is found in the cell cortex. It localises to the cytosol. The protein resides in the synapse. The protein localises to the perikaryon. Its subcellular location is the neuron projection. It is found in the cell membrane. It localises to the cytoplasmic vesicle. The protein resides in the clathrin-coated vesicle membrane. The protein localises to the golgi apparatus membrane. Its subcellular location is the podosome. It is found in the early endosome. It localises to the dendrite. The protein resides in the postsynaptic density. In terms of biological role, adapter protein that binds F-actin and dynamin, and thereby plays a role in receptor-mediated endocytosis. Plays a role in the reorganization of the actin cytoskeleton, formation of cell projections, such as neurites, in neuron morphogenesis and synapse formation. Does not bind G-actin and promote actin polymerization by itself, but excerts its functions by interaction with other proteins. Required for the formation of organized podosome rosettes. The chain is Drebrin-like protein B (dbnl-b) from Xenopus laevis (African clawed frog).